The following is a 360-amino-acid chain: Spore germination protein GerQB (360 aa).

10 helical membrane passes run 11-31 (SPYMVFFLIITIQMGVGMLGF), 45-65 (ISTLLFGISVNVMIWIIYQIL), 84-104 (IGGLLNFIFLSYIVLLGATTL), 116-136 (FPSISSWVIAGAFLGLCYYIV), 142-162 (VVAGIGFFGIVIPSILIFTFF), 188-208 (MKGNMFSFFGFEMLLLYYPFI), 220-240 (YANLVTTIVYTYLMILTLAFF), 270-290 (IIVSVWAFFILPNVSFTLWGV), 300-320 (IKQKYVLPVIILFIFILSFFL), and 331-351 (TWTGQIGFVYIYVYLPVLWLI).

Belongs to the amino acid-polyamine-organocation (APC) superfamily. Spore germination protein (SGP) (TC 2.A.3.9) family.

The protein resides in the membrane. Functionally, required for the germination response to inosine. Has no role in L-alanine germination. This chain is Spore germination protein GerQB (gerQB), found in Bacillus cereus.